A 104-amino-acid chain; its full sequence is Large ribosomal subunit protein uL24 (104 aa).

Belongs to the universal ribosomal protein uL24 family. In terms of assembly, part of the 50S ribosomal subunit.

Its function is as follows. One of two assembly initiator proteins, it binds directly to the 5'-end of the 23S rRNA, where it nucleates assembly of the 50S subunit. In terms of biological role, one of the proteins that surrounds the polypeptide exit tunnel on the outside of the subunit. The sequence is that of Large ribosomal subunit protein uL24 from Dichelobacter nodosus (strain VCS1703A).